Here is a 300-residue protein sequence, read N- to C-terminus: Aspartate carbamoyltransferase catalytic subunit (300 aa).

The carbamoyl phosphate site is built by arginine 54 and threonine 55. Lysine 82 contributes to the L-aspartate binding site. Residues arginine 104, histidine 131, and glutamine 134 each coordinate carbamoyl phosphate. Arginine 164 and arginine 213 together coordinate L-aspartate. The carbamoyl phosphate site is built by alanine 256 and proline 257.

The protein belongs to the aspartate/ornithine carbamoyltransferase superfamily. ATCase family. Heterododecamer (2C3:3R2) of six catalytic PyrB chains organized as two trimers (C3), and six regulatory PyrI chains organized as three dimers (R2).

It carries out the reaction carbamoyl phosphate + L-aspartate = N-carbamoyl-L-aspartate + phosphate + H(+). It participates in pyrimidine metabolism; UMP biosynthesis via de novo pathway; (S)-dihydroorotate from bicarbonate: step 2/3. Functionally, catalyzes the condensation of carbamoyl phosphate and aspartate to form carbamoyl aspartate and inorganic phosphate, the committed step in the de novo pyrimidine nucleotide biosynthesis pathway. In Malacoplasma penetrans (strain HF-2) (Mycoplasma penetrans), this protein is Aspartate carbamoyltransferase catalytic subunit.